The following is a 460-amino-acid chain: tRNA modification GTPase MnmE (460 aa).

Positions 22, 87, and 126 each coordinate (6S)-5-formyl-5,6,7,8-tetrahydrofolate. Positions 222–381 (GLKTAIIGKP…LENTIYNLVF (160 aa)) constitute a TrmE-type G domain. Asn-232 serves as a coordination point for K(+). GTP is bound by residues 232–237 (NVGKSS), 251–257 (TDIPGTT), and 276–279 (DTAG). Ser-236 provides a ligand contact to Mg(2+). K(+)-binding residues include Thr-251, Ile-253, and Thr-256. Thr-257 is a binding site for Mg(2+). Lys-460 contacts (6S)-5-formyl-5,6,7,8-tetrahydrofolate.

It belongs to the TRAFAC class TrmE-Era-EngA-EngB-Septin-like GTPase superfamily. TrmE GTPase family. In terms of assembly, homodimer. Heterotetramer of two MnmE and two MnmG subunits. Requires K(+) as cofactor.

The protein resides in the cytoplasm. Exhibits a very high intrinsic GTPase hydrolysis rate. Involved in the addition of a carboxymethylaminomethyl (cmnm) group at the wobble position (U34) of certain tRNAs, forming tRNA-cmnm(5)s(2)U34. The polypeptide is tRNA modification GTPase MnmE (Thermoanaerobacter pseudethanolicus (strain ATCC 33223 / 39E) (Clostridium thermohydrosulfuricum)).